Consider the following 882-residue polypeptide: Protein PML (882 aa).

The tract at residues 1-48 (MEPAPARSPRPQQDPARPQEPTMPPPETPSEGRQPSPSPSPTERAPAS) is disordered. A Phosphoserine; by HIPK2 modification is found at Ser8. Phosphoserine; by HIPK2 and MAPK1 occurs at positions 36 and 38. Position 48 is a phosphoserine (Ser48). Positions 57 and 60 each coordinate Zn(2+). Residues 57–92 (CQQCQAEAKCPKLLPCLHTLCSGCLEASGMQCPICQ) form an RING-type zinc finger. Residue Lys65 forms a Glycyl lysine isopeptide (Lys-Gly) (interchain with G-Cter in SUMO1); alternate linkage. A Glycyl lysine isopeptide (Lys-Gly) (interchain with G-Cter in SUMO2); alternate cross-link involves residue Lys65. Zn(2+)-binding residues include Cys72, His74, Cys77, Cys80, Cys88, and Cys91. At Ser117 the chain carries Phosphoserine; by CHEK2. The B box-type 1; atypical zinc finger occupies 124 to 166 (DAQAVCTRCKESADFWCFECEQLLCAKCFEAHQWFLKHEARPL). Zn(2+) contacts are provided by Cys129, Cys132, Cys151, and His155. A Glycyl lysine isopeptide (Lys-Gly) (interchain with G-Cter in SUMO1); alternate cross-link involves residue Lys160. A Glycyl lysine isopeptide (Lys-Gly) (interchain with G-Cter in SUMO2); alternate cross-link involves residue Lys160. Residue Lys160 forms a Glycyl lysine isopeptide (Lys-Gly) (interchain with G-Cter in SUMO1P1/SUMO5); alternate linkage. The segment at 183–236 (KTNNIFCSNPNHRTPTLTSIYCRGCSKPLCCSCALLDSSHSELKCDISAEIQQR) adopts a B box-type 2 zinc-finger fold. Cys189, His194, Cys215, and His222 together coordinate Zn(2+). The stretch at 228–253 (DISAEIQQRQEELDAMTQALQEQDSA) forms a coiled coil. Lys380 is covalently cross-linked (Glycyl lysine isopeptide (Lys-Gly) (interchain with G-Cter in SUMO2); alternate). A Glycyl lysine isopeptide (Lys-Gly) (interchain with G-Cter in /SUMO5); alternate cross-link involves residue Lys380. A Glycyl lysine isopeptide (Lys-Gly) (interchain with G-Cter in ubiquitin); alternate cross-link involves residue Lys380. Lys394 participates in a covalent cross-link: Glycyl lysine isopeptide (Lys-Gly) (interchain with G-Cter in SUMO2). Lys400 participates in a covalent cross-link: Glycyl lysine isopeptide (Lys-Gly) (interchain with G-Cter in SUMO1P1/SUMO5); alternate. Glycyl lysine isopeptide (Lys-Gly) (interchain with G-Cter in ubiquitin); alternate cross-links involve residues Lys400 and Lys401. Residue Lys401 forms a Glycyl lysine isopeptide (Lys-Gly) (interchain with G-Cter in SUMO2); alternate linkage. At Ser403 the chain carries Phosphoserine; by MAPK1 and MAPK7. Residues 448 to 555 (GAHPVPVYAF…ASGAGEAEER (108 aa)) are interaction with PER2. Lys460 is covalently cross-linked (Glycyl lysine isopeptide (Lys-Gly) (interchain with G-Cter in SUMO2)). The disordered stretch occupies residues 467–589 (DVSNTTTAQK…SESSDLQLEG (123 aa)). Polar residues predominate over residues 468–484 (VSNTTTAQKRKCSQTQC). Lys476 participates in a covalent cross-link: Glycyl lysine isopeptide (Lys-Gly) (interchain with G-Cter in SUMO2); alternate. A Glycyl lysine isopeptide (Lys-Gly) (interchain with G-Cter in ubiquitin); alternate cross-link involves residue Lys476. Residues 476–490 (KRKCSQTQCPRKVIK) carry the Nuclear localization signal motif. Lys478 is covalently cross-linked (Glycyl lysine isopeptide (Lys-Gly) (interchain with G-Cter in SUMO2)). Residues Lys487 and Lys490 each participate in a glycyl lysine isopeptide (Lys-Gly) (interchain with G-Cter in SUMO2); alternate cross-link. Lys487 carries the post-translational modification N6-acetyllysine; alternate. Positions 489-501 (IKMESEEGKEARL) are enriched in basic and acidic residues. Residue Lys490 forms a Glycyl lysine isopeptide (Lys-Gly) (interchain with G-Cter in SUMO1); alternate linkage. A Glycyl lysine isopeptide (Lys-Gly) (interchain with G-Cter in SUMO1P1/SUMO5); alternate cross-link involves residue Lys490. Residue Ser493 is modified to Phosphoserine. Residue Lys497 forms a Glycyl lysine isopeptide (Lys-Gly) (interchain with G-Cter in SUMO1); alternate linkage. Lys497 participates in a covalent cross-link: Glycyl lysine isopeptide (Lys-Gly) (interchain with G-Cter in SUMO2); alternate. A Glycyl lysine isopeptide (Lys-Gly) (interchain with G-Cter in SUMO1P1/SUMO5); alternate cross-link involves residue Lys497. A Phosphoserine modification is found at Ser504. Ser505 is subject to Phosphoserine; by MAPK1. Positions 505–516 (SPEQPRPSTSKA) are enriched in polar residues. A Phosphoserine modification is found at Ser512. N6-acetyllysine is present on Lys515. Residues Ser518, Ser527, and Ser530 each carry the phosphoserine modification. Ser518 is modified (phosphoserine; by CDK1 and CDK2). 2 positions are modified to phosphoserine; by MAPK1: Ser527 and Ser530. Positions 556-562 (VVVISSS) are sumo interaction motif (SIM). At Ser565 the chain carries Phosphoserine. At Ser565 the chain carries Phosphoserine; by CK2. Thr867 carries the post-translational modification Phosphothreonine.

Key component of PML bodies. PML bodies are formed by the interaction of PML homodimers (via SUMO-binding motif) with sumoylated PML, leading to the assembly of higher oligomers. Several types of PML bodies have been observed. PML bodies can form hollow spheres that can sequester target proteins inside. Interacts (via SUMO-binding motif) with sumoylated proteins. Interacts (via C-terminus) with p53/TP53. Recruits p53/TP53 and CHEK2 into PML bodies, which promotes p53/TP53 phosphorylation at 'Ser-20' and prevents its proteasomal degradation. Interacts with MDM2, and sequesters MDM2 in the nucleolus, thereby preventing ubiquitination of p53/TP53. Interaction with PML-RARA oncoprotein and certain viral proteins causes disassembly of PML bodies and abolishes the normal PML function. Interacts with HIPK2, TERT, SIRT1, TOPBP1, TRIM27 and TRIM69. Interacts with ELF4 (via C-terminus). Interacts with ITPR3. Interacts (in the cytoplasm) with TGFBR1, TGFBR2 and PKM. Interacts (via the coiled-coil domain and when sumoylated) with SATB1. Interacts with UBE2I; the interaction is enhanced by arsenic binding. Interacts (PML-RARA oncoprotein, via the coiled-coil domain) with UBE2I; the interaction is enhanced by arsenic binding and is required for PML-RARA oncoprotein sumoylation and inhibition of RARA transactivational activity. Interacts with RB1, PPP1A, SMAD2, SMAD3, DAXX, RPL11 and MTOR. Interacts with PPARGC1A and KAT2A. Interacts with CSNK2A1 and CSNK2A3. Interacts with ANKRD2; the interaction is direct. Interacts (via SUMO-interacting motif) with sumoylated MORC3. Isoform PML-1, isoform PML-2, isoform PML-3, isoform PML-4, isoform PML-5 and isoform PML-6 interact with RNF4. Isoform PML-1 interacts with NLRP3. Isoform PML-1, isoform PML-2, isoform PML-3, isoform PML-4 and isoform PML-5 interact with MAGEA2, RBL2, PER2 and E2F4. Isoform PML-2 interacts with CIITA. Isoform PML-2, isoform PML-3 and isoform PML-4 interact with TBX2. Isoform PML-4 interacts with RANBP2, HDAC7, KAT6A, WRN, PIN1, TBX3 and phosphorylated MAPK1/ERK2. Isoform PML-4 interacts with the CTNNB1 and TCF7L2/TCF4 complex. Isoform PML-4 preferentially interacts with MAPK7/BMK1 although other isoforms (isoform PML-1, isoform PML-2, isoform PML-3 and isoform PML-6) also interact with it. Isoform PML-12 interacts with PIAS1, PIAS2 (isoform PIAS2-alpha) and CSNK2A1/CK2. Interacts with TRIM16. Interacts with PRDM1/Blimp-1. Interacts (via RING-type zinc finger) with EIF4E; the interaction results in conformational changes of both interacting proteins and reduces EIF4E affinity for the 5' m7G cap of mRNA, thus reducing EIF4E-mediated mRNA nuclear export. In terms of assembly, (Microbial infection) Interacts with Lassa virus Z protein and rabies virus phosphoprotein. As to quaternary structure, (Microbial infection) Isoform PML-1 interacts with herpes simplex virus-1/HHV-1 ICP0. (Microbial infection) Isoform PML-2 interacts with human adenovirus 2 E1A and this interaction stimulates E1A-dependent transcriptional activation. In terms of assembly, (Microbial infection) Isoform PML-4 interacts with VZV capsid protein VP26/ORF23 capsid protein. As to quaternary structure, (Microbial infection) The sumoylated isoform PML-4 interacts with encephalomyocarditis virus (EMCV) RNA-directed RNA polymerase 3D-POL (P3D-POL). (Microbial infection) Isoform PML-6 interacts with moloney murine leukemia virus (MoMLV) integrase (IN) and reverse transcriptase (RT). In terms of assembly, (Microbial infection) Isoform PML-4 and isoform PML-5 interact with human adenovirus 5 E1B-55K protein; these interactions promote efficient subnuclear targeting of E1B-55K to PML nuclear bodies. As to quaternary structure, (Microbial infection) Isoform PML-3 interacts (via RING-type zinc finger) with human foamy virus bel1/tas and bet. (Microbial infection) Interacts with human cytomegalovirus (HHV-5) immediate early protein IE1; this interaction mediates PML desumoylation and PML-mediated sumoylation of IE1. Ubiquitinated; mediated by RNF4, RNF111, UHRF1, UBE3A/E6AP, BCR(KLHL20) E3 ubiquitin ligase complex E3 ligase complex, SIAH1 or SIAH2 and leading to subsequent proteasomal degradation. Ubiquitination by BCR(KLHL20) E3 ubiquitin ligase complex E3 ligase complex requires CDK1/2-mediated phosphorylation at Ser-518 which in turn is recognized by prolyl-isopeptidase PIN1 and PIN1-catalyzed isomerization further potentiates PML interaction with KLHL20. 'Lys-6'-, 'Lys-11'-, 'Lys-48'- and 'Lys-63'-linked polyubiquitination by RNF4 is polysumoylation-dependent. Ubiquitination by RNF111 is polysumoylation-dependent. In terms of processing, sumoylation regulates PML's: stability in response to extracellular or intracellular stimuli, transcription directly and indirectly, through sequestration of or dissociation of the transcription factors from PML-NBs, ability to regulate apoptosis and its anti-viral activities. It is also essential for: maintaining proper PML nuclear bodies (PML-NBs) structure and normal function, recruitment of components of PML-NBs, the turnover and retention of PML in PML-NBs and the integrity of PML-NBs. Undergoes 'Lys-11'-linked sumoylation. Sumoylation on all three sites (Lys-65, Lys-160 and Lys-490) is required for nuclear body formation. Sumoylation on Lys-160 is a prerequisite for sumoylation on Lys-65. Lys-65 and Lys-160 are sumoylated by PISA1 and PIAS2. PIAS1-mediated sumoylation of PML promotes its interaction with CSNK2A1/CK2 and phosphorylation at Ser-565 which in turn triggers its ubiquitin-mediated degradation. PIAS1-mediated sumoylation of PML-RARA promotes its ubiquitin-mediated degradation. The PML-RARA fusion protein requires the coiled-coil domain for sumoylation. Sumoylation at Lys-490 by RANBP2 is essential for the proper assembly of PML-NBs. SUMO1P1/SUMO5 conjugated PML at Lys-160, Lys-380, Lys-400, Lys-490 and Lys-497, but Lys-380, Lys-400 and Lys-497 are not key acceptor lysines. SUMO1P1/SUMO5 forms polymeric chain on Lys-160 of PML by successive conjugation at 'Lys-18'; facilitating recruitment of PML-NB components, which enlarges PML. SUMO1P1/SUMO5 conjugation of PML increases SUMO2/3 conjugation, which leads to the recruitment of RNF4 and ubiquitin-dependent disintegration of PML-NBs. SUMO1P1/SUMO5 monoconjugated Lys-490. DNA damage triggers its sumoylation while some but not all viral infections can abolish sumoylation. Desumoylated by SENP1, SENP2, SENP3, SENP5 and SENP6. Arsenic induces PML and PML-RARA polysumoylation and their subsequent RNF4-dependent ubiquitination and proteasomal degradation, and is used as treatment in acute promyelocytic leukemia (APL). The nuclear isoforms (isoform PML-1, isoform PML-2, isoform PML-3, isoform PML-4, isoform PML-5 and isoform PML-6) show an increased sumoylation in response to arsenic trioxide. The cytoplasmic isoform PML-7 is not sumoylated. Post-translationally, phosphorylation is a major regulatory mechanism that controls PML protein abundance and the number and size of PML nuclear bodies (PML-NBs). Phosphorylated in response to DNA damage, probably by ATR. HIPK2-mediated phosphorylation at Ser-8, Ser-36 and Ser-38 leads to increased accumulation of PML protein and its sumoylation and is required for the maximal pro-apoptotic activity of PML after DNA damage. CHEK2-mediated phosphorylation at Ser-117 is important for PML-mediated apoptosis following DNA damage. MAPK1-mediated phosphorylations at Ser-403, Ser-505, Ser-527 and Ser-530 and CDK1/2-mediated phosphorylation at Ser-518 promote PIN1-dependent PML degradation. CK2-mediated phosphorylation at Ser-565 primes PML ubiquitination via an unidentified ubiquitin ligase. (Microbial infection) Upon infection with Epstein-Barr virus, phosphorylated by CK2. Viral EBNA1 increases the association of CK2 with PML proteins, which increases PML phosphorylation by CK2, triggering the USP7-dependent polyubiquitylation and degradation of PML. In terms of processing, acetylation at Lys-487 is essential for its nuclear localization. Deacetylated at Lys-487 by SIRT1 and this deacetylation promotes PML control of PER2 nuclear localization. Post-translationally, (Microbial infection) Immediate early protein IE1 of human cytomegalovirus (HHV-5) interferes with the sumoylation of PML. Immediate early protein IE1 inhibits PML de novo sumoylation. (Microbial infection) Cleaved at two different sites by enterovirus 71 protease 3C, leading to impaired PML-Nuclear bodies formation.

It is found in the nucleus. The protein resides in the nucleoplasm. Its subcellular location is the cytoplasm. It localises to the PML body. The protein localises to the nucleolus. It is found in the endoplasmic reticulum membrane. The protein resides in the early endosome membrane. It participates in protein modification; protein sumoylation. Functions via its association with PML-nuclear bodies (PML-NBs) in a wide range of important cellular processes, including tumor suppression, transcriptional regulation, apoptosis, senescence, DNA damage response, and viral defense mechanisms. Acts as the scaffold of PML-NBs allowing other proteins to shuttle in and out, a process which is regulated by SUMO-mediated modifications and interactions. Inhibits EIF4E-mediated mRNA nuclear export by reducing EIF4E affinity for the 5' 7-methylguanosine (m7G) cap of target mRNAs. Isoform PML-4 has a multifaceted role in the regulation of apoptosis and growth suppression: activates RB1 and inhibits AKT1 via interactions with PP1 and PP2A phosphatases respectively, negatively affects the PI3K pathway by inhibiting MTOR and activating PTEN, and positively regulates p53/TP53 by acting at different levels (by promoting its acetylation and phosphorylation and by inhibiting its MDM2-dependent degradation). Isoform PML-4 also: acts as a transcriptional repressor of TBX2 during cellular senescence and the repression is dependent on a functional RBL2/E2F4 repressor complex, regulates double-strand break repair in gamma-irradiation-induced DNA damage responses via its interaction with WRN, acts as a negative regulator of telomerase by interacting with TERT, and regulates PER2 nuclear localization and circadian function. Isoform PML-6 inhibits specifically the activity of the tetrameric form of PKM. The nuclear isoforms (isoform PML-1, isoform PML-2, isoform PML-3, isoform PML-4 and isoform PML-5) in concert with SATB1 are involved in local chromatin-loop remodeling and gene expression regulation at the MHC-I locus. Isoform PML-2 is required for efficient IFN-gamma induced MHC II gene transcription via regulation of CIITA. Cytoplasmic PML is involved in the regulation of the TGF-beta signaling pathway. PML also regulates transcription activity of ELF4 and can act as an important mediator for TNF-alpha- and IFN-alpha-mediated inhibition of endothelial cell network formation and migration. Functionally, exhibits antiviral activity against both DNA and RNA viruses. The antiviral activity can involve one or several isoform(s) and can be enhanced by the permanent PML-NB-associated protein DAXX or by the recruitment of p53/TP53 within these structures. Isoform PML-4 restricts varicella zoster virus (VZV) via sequestration of virion capsids in PML-NBs thereby preventing their nuclear egress and inhibiting formation of infectious virus particles. The sumoylated isoform PML-4 restricts rabies virus by inhibiting viral mRNA and protein synthesis. The cytoplasmic isoform PML-14 can restrict herpes simplex virus-1 (HHV-1) replication by sequestering the viral E3 ubiquitin-protein ligase ICP0 in the cytoplasm. Isoform PML-6 shows restriction activity towards human cytomegalovirus (HHV-5) and influenza A virus strains PR8(H1N1) and ST364(H3N2). Sumoylated isoform PML-4 and isoform PML-12 show antiviral activity against encephalomyocarditis virus (EMCV) by promoting nuclear sequestration of viral polymerase (P3D-POL) within PML NBs. Isoform PML-3 exhibits antiviral activity against poliovirus by inducing apoptosis in infected cells through the recruitment and the activation of p53/TP53 in the PML-NBs. Isoform PML-3 represses human foamy virus (HFV) transcription by complexing the HFV transactivator, bel1/tas, preventing its binding to viral DNA. PML may positively regulate infectious hepatitis C viral (HCV) production and isoform PML-2 may enhance adenovirus transcription. Functions as an E3 SUMO-protein ligase that sumoylates (HHV-5) immediate early protein IE1, thereby participating in the antiviral response. Isoforms PML-3 and PML-6 display the highest levels of sumoylation activity. The chain is Protein PML (PML) from Homo sapiens (Human).